Here is a 321-residue protein sequence, read N- to C-terminus: NADH-ubiquinone oxidoreductase chain 1 (321 aa).

The next 8 membrane-spanning stretches (helical) occupy residues Leu5–Thr25, Leu74–Pro94, Leu104–Gly124, Gly151–Ile171, Tyr175–Ala195, Phe227–Ile247, Glu256–Ile276, and Phe296–Gly316.

Belongs to the complex I subunit 1 family.

The protein localises to the mitochondrion inner membrane. The enzyme catalyses a ubiquinone + NADH + 5 H(+)(in) = a ubiquinol + NAD(+) + 4 H(+)(out). Functionally, core subunit of the mitochondrial membrane respiratory chain NADH dehydrogenase (Complex I) that is believed to belong to the minimal assembly required for catalysis. Complex I functions in the transfer of electrons from NADH to the respiratory chain. The immediate electron acceptor for the enzyme is believed to be ubiquinone. In Varanus baritji (Black-spotted ridge-tailed monitor), this protein is NADH-ubiquinone oxidoreductase chain 1 (MT-ND1).